The chain runs to 172 residues: Large ribosomal subunit protein uL10 (172 aa).

This sequence belongs to the universal ribosomal protein uL10 family. In terms of assembly, part of the ribosomal stalk of the 50S ribosomal subunit. The N-terminus interacts with L11 and the large rRNA to form the base of the stalk. The C-terminus forms an elongated spine to which L12 dimers bind in a sequential fashion forming a multimeric L10(L12)X complex.

In terms of biological role, forms part of the ribosomal stalk, playing a central role in the interaction of the ribosome with GTP-bound translation factors. The protein is Large ribosomal subunit protein uL10 of Francisella philomiragia subsp. philomiragia (strain ATCC 25017 / CCUG 19701 / FSC 153 / O#319-036).